The sequence spans 238 residues: Sugar fermentation stimulation protein homolog (238 aa).

The protein belongs to the SfsA family.

This is Sugar fermentation stimulation protein homolog from Klebsiella pneumoniae (strain 342).